The primary structure comprises 512 residues: SNF1-related protein kinase catalytic subunit alpha KIN10 (512 aa).

Residues 19–271 (YKLGRTLGIG…IPEIRQHPWF (253 aa)) enclose the Protein kinase domain. Lys20 participates in a covalent cross-link: Glycyl lysine isopeptide (Lys-Gly) (interchain with G-Cter in ubiquitin). Residue 25 to 33 (LGIGSFGRV) participates in ATP binding. Lys34 participates in a covalent cross-link: Glycyl lysine isopeptide (Lys-Gly) (interchain with G-Cter in SUMO). An ATP-binding site is contributed by Lys48. A Glycyl lysine isopeptide (Lys-Gly) (interchain with G-Cter in SUMO) cross-link involves residue Lys63. Asp142 acts as the Proton acceptor in catalysis. Ser164 is modified (phosphoserine). Thr175 bears the Phosphothreonine; by GRIK1 or GRIK2 mark. The auto-inhibitory domain (AID) stretch occupies residues 290-389 (AKKIDEEILQ…GLRSQYPVER (100 aa)). Residues 292–332 (KIDEEILQEVINMGFDRNHLIESLRNRTQNDGTVTYYLILD) form the UBA domain. The regulatory domain (RD) stretch occupies residues 294-512 (DEEILQEVIN…AAFLAQLRVL (219 aa)). Ser364 is modified (phosphoserine). Lys390 is covalently cross-linked (Glycyl lysine isopeptide (Lys-Gly) (interchain with G-Cter in SUMO)). Residues 390-512 (KWALGLQSRA…AAFLAQLRVL (123 aa)) form a PPI region. The 49-residue stretch at 463 to 511 (AVKSPNVVKFEIQLYKTRDDKYLLDLQRVQGPQFLFLDLCAAFLAQLRV) folds into the KA1 domain.

Belongs to the protein kinase superfamily. CAMK Ser/Thr protein kinase family. SNF1 subfamily. As to quaternary structure, subunit of a probable heterotrimeric complex consisting of an alpha catalytic (KIN10 or KIN11) subunit, and a beta (KINB) and a gamma (KING or SNF4) non-catalytic regulatory subunits. Interacts with KINB2, KINB3, SNF4 and probably with KINB1 and KING1. Interacts with SKP1/ASK1, PAD1, the N-terminus of PRL1 and the WD40 domain of 5PTase13. Potential subunit of a SCF ubiquitin ligase complex consisting of a SNF1-related protein kinase, SKP1 and CUL1. The association of the SCF complex with the proteasome may be mediated by PAD1 and seems to be inhibited by the interaction with PRL1. Interacts with ATAF1. Interacts with ESD4. Interacts with SCE1. Interacts with FUS3. Interacts with PP2C74. Interacts with CDKE1. Interacts with ABI1 and PP2CA. Interacts with KRP6. Interacts with CIPK14. Interacts with FLZ proteins through their FLZ-type zinc finger domains. Interacts with GEBP/STKR1. Interacts with MYC2. Interacts with IDD8. Interacts with BZIP63. Interacts with PTL. Interacts with FLZ3, FLZ9, TCP3, TCP13, HB21/ZHD3 and HB23/ZHD10. Interacts with PTP1. Interacts with RAPTOR1B. Forms oligomers in vitro under strongly reducing conditions. Interacts with WRI1. Interacts with EIN3. Component of a ternary complex composed of BZIP2-BZIP63 heterodimer and KIN10. Interacts with IPK2b. Interacts with FLZ6 and FLZ10. Post-translationally, phosphorylated at Thr-175 in response to glucose. Phosphorylated at Thr-175 under submergence. Autophosphorylated. Dephosphorylated at Thr-175 by ABI1 and PP2CA. Ubiquitinated. Degradation is mediated by a CUL4-based E3 ligase that uses PRL1 as a substrate receptor. In terms of processing, sumoylated by SIZ1. Sumoylated SnRK1 is ubiquitinated and degraded by the proteasome. Isoform 2 is widely expressed, especially in newly developing tissues. Isoform 2 is expressed throughout the seedling, with highest expression in leaf primordia and vascular tissue, and the seedling root tip. Isoform 2 is later expressed in developing lateral root primordia and developing embryos within siliques. Isoform 1 is widely expressed but at very low levels.

The protein localises to the plastid. It localises to the chloroplast. The protein resides in the cytoplasm. It is found in the nucleus. Its subcellular location is the golgi apparatus. The protein localises to the endoplasmic reticulum. It carries out the reaction L-seryl-[protein] + ATP = O-phospho-L-seryl-[protein] + ADP + H(+). The catalysed reaction is L-threonyl-[protein] + ATP = O-phospho-L-threonyl-[protein] + ADP + H(+). With respect to regulation, activated by phosphorylation at Thr-175 by GRIK1/SNAK2 and GRIK2/SNAK1. Inactivated by dephosphorylation at Thr-175. Inhibited by trehalose-6-phosphate. Down-regulated by SR45 by affecting its stability. Reduced kinase activity in response to H(2)O(2) treatment. The redox-state of Cys-177 seems to directly influence its kinase activity. Down-regulated by FLZ6 and FLZ10. Its function is as follows. Catalytic subunit of the probable trimeric SNF1-related protein kinase (SnRK) complex, a central regulator of cellular energy homeostasis, which, in response to seemingly unrelated darkness, sugar and stress conditions, activates energy-producing pathways and inhibits energy-consuming processes. May play a role in a signal transduction cascade regulating gene expression and carbohydrate metabolism in higher plants. The SnRK complex may also be involved in the regulation of fatty acid synthesis by phosphorylation of acetyl-CoA carboxylase and in assimilation of nitrogen by phosphorylating nitrate reductase. In vitro, KIN10 exhibits kinase activity on sucrose phosphate synthase and the kinase activity is inhibited by PRL1. May be a subunit of a SCF ubiquitin ligase complex and thus be involved in proteasomal ubiquitination. Phosphorylates GRIK1/SNAK2 and GRIK2/SNAK1 in vitro. Cooperates with FUS3 to regulate developmental phase transitions and lateral organ development and act both as positive regulators of abscisic acid (ABA) signaling during germination. Phosphorylates FUS3 in embryo. Negatively modulates MYC2 accumulation through its protein phosphorylation. Phosphorylates geminivirus (CaLCuV, TGMV, ToMoV) AL2 protein resulting in a delay in the viral DNA accumulation and symptom appearance during infection. Regulates bZIP63 activity to alter metabolism in response to starvation through its protein phosphorylation. Under sugar deprivation conditions, antagonizes the IDD8 function in flowering time control by its protein phosphorylation. Plays a cardinal role in the control of cell proliferation through inhibition of KRP6 activity by its protein phosphorylation. Under submergence, phosphorylates PTP1, leading to the release of the MPK6 signaling pathway inhibition. Triggers its own SUMO-mediated proteasomal degradation, establishing a negative feedback loop that attenuates SnRK1 signaling and prevents detrimental hyperactivation of stress responses. Phosphorylates RAPTOR1B in vitro. Phosphorylates and down-regulates HMGR1S in vitro. Kinase activity is redox-sensitive. Acts upstream of TOR in the regulation of autophagy. Required for the activation of autophagy by many abiotic stresses. Involved in positive regulation of autophagy, possibly by affecting the phosphorylation of ATG1 proteins. Negatively modulates WRI1 accumulation through its protein phosphorylation. Modulates leaf senescence progression by the negative regulation of EIN3 accumulation through its protein phosphorylation. Under extended darkness, C/S1-bZIP-SnRK1 complex interacts with the histone acetylation machinery to remodel chromatin and facilitate transcription. BZIP2-BZIP63-KIN10 complex binds to the ETFQO promoter to up-regulate its transcription. Phosphorylates and down-regulates IPK2b in vitro. Involved in the regulation of sucrose-induced hypocotyl elongation under light/dark cycles. This chain is SNF1-related protein kinase catalytic subunit alpha KIN10, found in Arabidopsis thaliana (Mouse-ear cress).